A 72-amino-acid polypeptide reads, in one-letter code: Translation initiation factor IF-1 (72 aa).

The 72-residue stretch at 1–72 folds into the S1-like domain; that stretch reads MTKEEAIEVD…SRGRIMFRER (72 aa).

Belongs to the IF-1 family. As to quaternary structure, component of the 30S ribosomal translation pre-initiation complex which assembles on the 30S ribosome in the order IF-2 and IF-3, IF-1 and N-formylmethionyl-tRNA(fMet); mRNA recruitment can occur at any time during PIC assembly.

It localises to the cytoplasm. In terms of biological role, one of the essential components for the initiation of protein synthesis. Stabilizes the binding of IF-2 and IF-3 on the 30S subunit to which N-formylmethionyl-tRNA(fMet) subsequently binds. Helps modulate mRNA selection, yielding the 30S pre-initiation complex (PIC). Upon addition of the 50S ribosomal subunit IF-1, IF-2 and IF-3 are released leaving the mature 70S translation initiation complex. In Treponema pallidum (strain Nichols), this protein is Translation initiation factor IF-1.